Here is a 131-residue protein sequence, read N- to C-terminus: uncharacterized protein (131 aa).

4 consecutive transmembrane segments (helical) span residues 7–29 (LLKF…SLLY), 49–69 (LVKV…LIAL), 76–98 (LILI…LFTY), and 102–124 (ELSE…FLYL).

It localises to the cell membrane. This is an uncharacterized protein from Aquifex aeolicus (strain VF5).